The following is a 901-amino-acid chain: Vacuolar import and degradation protein 22 (901 aa).

The span at 1–10 (MRAMDTQVQS) shows a compositional bias: polar residues. The tract at residues 1-54 (MRAMDTQVQSAERGLVLPPMNSTVSSATAATTATNTDTDTDGDRDEERESLAED) is disordered. The N-linked (GlcNAc...) asparagine glycan is linked to Asn-21. Positions 27-37 (ATAATTATNTD) are enriched in low complexity. Residues 66-122 (RDRSRYLGHFLGVDKMLEAVKCKYCGVIIRRQGNSISMAEASQTHLWSTHKIDPNAN) form a BED-type zinc finger. Positions 87, 90, 110, and 115 each coordinate Zn(2+). N-linked (GlcNAc...) asparagine glycans are attached at residues Asn-242 and Asn-291. Residues 381–401 (YYHNCIISIINSAILPLFGTP) traverse the membrane as a helical segment. Asn-540, Asn-645, Asn-649, Asn-652, Asn-662, Asn-669, Asn-673, Asn-688, and Asn-722 each carry an N-linked (GlcNAc...) asparagine glycan. The segment covering 646–677 (NSHNTSNHSNMNIHTDNQTNNINNRSGNNSDN) has biased composition (low complexity). Residues 646 to 727 (NSHNTSNHSN…NSNNNLSFGS (82 aa)) are disordered. A compositionally biased stretch (basic and acidic residues) spans 679–688 (DNEHDNDNDN). Over residues 718–727 (NSNNNLSFGS) the composition is skewed to low complexity.

It belongs to the VID22 family. In terms of processing, glycosylated.

The protein localises to the cell membrane. It is found in the nucleus. In terms of biological role, has a role in the negative regulation of gluconeogenesis. Imports fructose-1,6-bisphosphatase (FBPase) into the intermediate vacuole import and degradation (Vid) vesicles. This is an indirect role and requires cyclophilin A. The polypeptide is Vacuolar import and degradation protein 22 (VID22) (Saccharomyces cerevisiae (strain ATCC 204508 / S288c) (Baker's yeast)).